A 471-amino-acid polypeptide reads, in one-letter code: Soluble pyridine nucleotide transhydrogenase (471 aa).

41–50 lines the FAD pocket; that stretch reads EREPSVGGGC.

The protein belongs to the class-I pyridine nucleotide-disulfide oxidoreductase family. FAD serves as cofactor.

It localises to the cytoplasm. The catalysed reaction is NAD(+) + NADPH = NADH + NADP(+). Its function is as follows. Conversion of NADPH, generated by peripheral catabolic pathways, to NADH, which can enter the respiratory chain for energy generation. The protein is Soluble pyridine nucleotide transhydrogenase of Aliivibrio fischeri (strain ATCC 700601 / ES114) (Vibrio fischeri).